The primary structure comprises 428 residues: Immunoglobulin superfamily containing leucine-rich repeat protein (428 aa).

The N-terminal stretch at M1–A18 is a signal peptide. Residues C19–A50 form the LRRNT domain. N51 carries N-linked (GlcNAc...) asparagine glycosylation. LRR repeat units lie at residues N51 to E72, R75 to S96, Q99 to S122, A123 to S144, and A147 to P168. In terms of domain architecture, LRRCT spans N180–A231. In terms of domain architecture, Ig-like spans P232–A343. C257 and C327 form a disulfide bridge. Residue N309 is glycosylated (N-linked (GlcNAc...) asparagine).

Its subcellular location is the secreted. This chain is Immunoglobulin superfamily containing leucine-rich repeat protein (ISLR), found in Bos taurus (Bovine).